A 2219-amino-acid polypeptide reads, in one-letter code: RNA-directed RNA polymerase L (2219 aa).

The segment at 26 to 289 is endonuclease; that stretch reads KLAFLVQTEP…TTEDDVEYLI (264 aa). Mn(2+) contacts are provided by E51, D89, and E102. Residue K115 is part of the active site. Residues 1177–1373 form the RdRp catalytic domain; that stretch reads LSMKLNVSLA…YMSDQLNKFV (197 aa). D1335 contributes to the Mg(2+) binding site.

This sequence belongs to the Bunyavirales RNA polymerase family. In terms of assembly, homomultimer; the oligomeric structure is essential for the polymerase activity. Interacts with nucleoprotein N. Interacts with protein Z; this interaction inhibits viral transcription and replication, Z partially blocks the product exit tunnel for the releasing nascent RNA product. Requires Mn(2+) as cofactor. It depends on Mg(2+) as a cofactor.

Its subcellular location is the virion. The protein resides in the host cytoplasm. The catalysed reaction is RNA(n) + a ribonucleoside 5'-triphosphate = RNA(n+1) + diphosphate. Its function is as follows. RNA-dependent RNA polymerase, which is responsible for the replication and transcription of the viral RNA genome using antigenomic RNA as an intermediate. During transcription, synthesizes subgenomic RNAs and assures their capping by a cap-snatching mechanism, which involves the endonuclease activity cleaving the host capped pre-mRNAs. These short capped RNAs are then used as primers for viral transcription. The 3'-end of subgenomic mRNAs molecules are heterogeneous and not polyadenylated. The replicase function is to direct synthesis of antigenomic and genomic RNA which are encapsidated and non capped. As a consequence of the use of the same enzyme for both transcription and replication, these mechanisms need to be well coordinated. These processes may be regulated by proteins N and Z in a dose-dependent manner. Z protein inhibits the viral polymerase L und thus the viral transcription and RNA synthesis. This chain is RNA-directed RNA polymerase L, found in Homo sapiens (Human).